The chain runs to 194 residues: FAD-linked sulfhydryl oxidase ERV1 (194 aa).

The segment at 44–72 (LSLSLSPPPTPPSPPPPPPEVLKKDSKAA) is disordered. Residues 49–63 (SPPPTPPSPPPPPPE) show a composition bias toward pro residues. An ERV/ALR sulfhydryl oxidase domain is found at 72–172 (APLTKEEVGR…FPCQRVNARW (101 aa)). Residues Lys-76, Arg-81, Trp-84, Glu-121, His-125, Cys-148, His-151, Asn-152, Asn-155, Lys-160, and Arg-171 each coordinate FAD. Cys-119 and Cys-122 are oxidised to a cystine. A disulfide bridge connects residues Cys-148 and Cys-165. Cysteines 177 and 182 form a disulfide. A Required for dimerization and substrate specificity motif is present at residues 177-182 (CPERSC).

As to quaternary structure, homodimer. FAD is required as a cofactor. Post-translationally, contains three disulfide bonds; one catalytic disulfide (Cys-119 to Cys-122), one structural disulfide (Cys-148 to Cys-165), and one shuttle disulfide (Cys-177 to Cys-182).

It is found in the mitochondrion. It carries out the reaction 2 R'C(R)SH + O2 = R'C(R)S-S(R)CR' + H2O2. In terms of biological role, FAD-dependent sulfhydryl oxidase that catalyzes disulfide bond formation. Oxidizes thioredoxin in vitro. Required for the import and folding of small cysteine-containing proteins in the mitochondrial intermembrane space, and can act independently of the oxidoreductase MIA40. Can oxidize the cytochrome c oxidase assembly protein COX19, a typical substrate of MIA40. In Oryza sativa subsp. japonica (Rice), this protein is FAD-linked sulfhydryl oxidase ERV1.